The primary structure comprises 824 residues: Intraflagellar transport protein 88 homolog (824 aa).

The tract at residues 113 to 134 (FDPLSQSRGPASPLEAKKKDSP) is disordered. 12 TPR repeats span residues 197-230 (YSVL…KMFS), 233-266 (GILK…VPSV), 272-305 (IKIM…APNL), 307-338 (AGYN…PLEI), 415-448 (NDLE…DSRV), 450-483 (SAAA…DRYN), 484-517 (PAAL…DSSC), 518-551 (TEAL…LRNS), 552-585 (AEVL…IPTD), 586-619 (PQVL…FPCN), 620-653 (IEVI…QPTQ), and 654-687 (VKWQ…FPEN). Residues 724–824 (EQRIKSGRDG…EELGDDLLPE (101 aa)) are disordered. Residues 748–757 (DSGQNYSASS) are compositionally biased toward polar residues. A compositionally biased stretch (basic and acidic residues) spans 797 to 808 (ERPKTAAKKRID). Positions 809–824 (EDDFADEELGDDLLPE) are enriched in acidic residues.

Component of the IFT complex B, at least composed of IFT20, IFT22, IFT25, IFT27, IFT46, IFT52, TRAF3IP1/IFT54, IFT57, IFT74, IFT80, IFT81, and IFT88. Interacts with IFT20, IFT22, IFT25, IFT27, IFT52, TRAF3IP1, IFT74, IFT80 and IFT81. Interacts with IFT172. Interacts with IFT57. Interacts with IFT46. Interacts with IFT70B. Interacts with C2CD3. Interacts with ENTR1 (via N-terminus). Interacts with LRRC56. Interacts with DZIP1. Interacts with CCDC38. Interacts with CCDC146. Interacts with CFAP53. Expressed in the heart, brain, liver, lung, kidney, skeletal muscle and pancreas.

It localises to the cytoplasm. The protein resides in the cytoskeleton. The protein localises to the microtubule organizing center. Its subcellular location is the centrosome. It is found in the centriole. It localises to the cell projection. The protein resides in the cilium. The protein localises to the cilium basal body. Its subcellular location is the flagellum. Its function is as follows. Positively regulates primary cilium biogenesis. Also involved in autophagy since it is required for trafficking of ATG16L and the expansion of the autophagic compartment. The chain is Intraflagellar transport protein 88 homolog (IFT88) from Homo sapiens (Human).